The primary structure comprises 200 residues: Dephospho-CoA kinase (200 aa).

Residues 4–200 (VIGLTGGIAS…AILKKWNIID (197 aa)) form the DPCK domain. ATP is bound at residue 12–17 (ASGKST).

Belongs to the CoaE family.

The protein localises to the cytoplasm. It catalyses the reaction 3'-dephospho-CoA + ATP = ADP + CoA + H(+). It participates in cofactor biosynthesis; coenzyme A biosynthesis; CoA from (R)-pantothenate: step 5/5. Functionally, catalyzes the phosphorylation of the 3'-hydroxyl group of dephosphocoenzyme A to form coenzyme A. In Bacillus thuringiensis subsp. konkukian (strain 97-27), this protein is Dephospho-CoA kinase.